The following is a 491-amino-acid chain: Aspartyl/glutamyl-tRNA(Asn/Gln) amidotransferase subunit B (491 aa).

It belongs to the GatB/GatE family. GatB subfamily. As to quaternary structure, heterotrimer of A, B and C subunits.

The enzyme catalyses L-glutamyl-tRNA(Gln) + L-glutamine + ATP + H2O = L-glutaminyl-tRNA(Gln) + L-glutamate + ADP + phosphate + H(+). The catalysed reaction is L-aspartyl-tRNA(Asn) + L-glutamine + ATP + H2O = L-asparaginyl-tRNA(Asn) + L-glutamate + ADP + phosphate + 2 H(+). Its function is as follows. Allows the formation of correctly charged Asn-tRNA(Asn) or Gln-tRNA(Gln) through the transamidation of misacylated Asp-tRNA(Asn) or Glu-tRNA(Gln) in organisms which lack either or both of asparaginyl-tRNA or glutaminyl-tRNA synthetases. The reaction takes place in the presence of glutamine and ATP through an activated phospho-Asp-tRNA(Asn) or phospho-Glu-tRNA(Gln). This is Aspartyl/glutamyl-tRNA(Asn/Gln) amidotransferase subunit B from Nostoc sp. (strain PCC 7120 / SAG 25.82 / UTEX 2576).